The following is a 527-amino-acid chain: Bifunctional methyltransferase (527 aa).

The segment at 1–309 is hemK; the sequence is MQYSIKQVLS…GHSRVILFSP (309 aa). The RF MTase stretch occupies residues 1-311; that stretch reads MQYSIKQVLS…SRVILFSPIN (311 aa). Residues 149-153, Asp172, Trp201, Asn216, Glu356, Glu381, Asn408, and Asp430 each bind S-adenosyl-L-methionine; that span reads GTGSG. Residue 216-219 participates in substrate binding; that stretch reads NPPY. The segment at 310–527 is tRNA (guanine-N(7)-)-methyltransferase; the sequence is INLNRSYARR…IILQHVSGDH (218 aa). The tRNA MTase stretch occupies residues 314–527; sequence RSYARRIGKS…IILQHVSGDH (214 aa). Asp430 is an active-site residue. Residues Lys434 and Asp466 each contribute to the substrate site.

In the C-terminal section; belongs to the class I-like SAM-binding methyltransferase superfamily. TrmB family. This sequence in the N-terminal section; belongs to the protein N5-glutamine methyltransferase family. PrmC subfamily.

The enzyme catalyses L-glutaminyl-[peptide chain release factor] + S-adenosyl-L-methionine = N(5)-methyl-L-glutaminyl-[peptide chain release factor] + S-adenosyl-L-homocysteine + H(+). It carries out the reaction guanosine(46) in tRNA + S-adenosyl-L-methionine = N(7)-methylguanosine(46) in tRNA + S-adenosyl-L-homocysteine. Its function is as follows. Methylates the class 1 translation termination release factors RF1/PrfA and RF2/PrfB on the glutamine residue of the universally conserved GGQ motif. Functionally, catalyzes the formation of N(7)-methylguanine at position 46 (m7G46) in tRNA. This chain is Bifunctional methyltransferase (prmC/trmB), found in Rickettsia felis (strain ATCC VR-1525 / URRWXCal2) (Rickettsia azadi).